The chain runs to 105 residues: Large ribosomal subunit protein bL21 (105 aa).

It belongs to the bacterial ribosomal protein bL21 family. As to quaternary structure, part of the 50S ribosomal subunit. Contacts protein L20.

This protein binds to 23S rRNA in the presence of protein L20. The polypeptide is Large ribosomal subunit protein bL21 (Stenotrophomonas maltophilia (strain R551-3)).